We begin with the raw amino-acid sequence, 513 residues long: QWRF motif-containing protein 9 (513 aa).

Polar residues-rich tracts occupy residues 1–26 (MTAA…PSES), 43–55 (GTSS…SPKR), and 65–78 (VTPS…PQST). 3 disordered regions span residues 1–89 (MTAA…RREV), 115–144 (GTLE…LSDQ), and 184–293 (VSNR…LRVR). The segment covering 79–89 (PRRESLDRREV) has biased composition (basic and acidic residues). Composition is skewed to polar residues over residues 202–211 (ESVSSGSSNG) and 244–262 (VDSS…SPRG). The short motif at 334-337 (QWQF) is the QWRF motif element.

It belongs to the QWRF family.

In Arabidopsis thaliana (Mouse-ear cress), this protein is QWRF motif-containing protein 9 (QWRF9).